The chain runs to 785 residues: Ubiquitin carboxyl-terminal hydrolase 1 (785 aa).

Disordered regions lie at residues 1–21 (MPGVIPSESNGLSRGSPSKKN) and 33–52 (TKRALDFTDSQENEEKASEY). Polar residues predominate over residues 7-16 (SESNGLSRGS). Ser-16, Ser-42, and Ser-67 each carry phosphoserine. One can recognise a USP domain in the interval 81-785 (VGLNNLGNTC…TPYLLFYKKL (705 aa)). Cys-90 (nucleophile) is an active-site residue. 2 stretches are compositionally biased toward basic and acidic residues: residues 258–275 (EDFKEKLPKGNGKRKSDT) and 286–298 (LSKEHQSLEENQR). The disordered stretch occupies residues 258–336 (EDFKEKLPKG…SPRPSQKKSR (79 aa)). Phosphoserine occurs at positions 313 and 475. His-593 (proton acceptor) is an active-site residue. A disordered region spans residues 693–723 (TAFAENRNSETSDTTGTHESDRNKESSDQTG). Basic and acidic residues predominate over residues 708–719 (GTHESDRNKESS). Ser-768 bears the Phosphoserine mark.

The protein belongs to the peptidase C19 family. As to quaternary structure, interacts with FANCD2 and PCNA. Interacts with WDR48. Interacts with ATAD5; the interaction regulates USP1-mediated PCNA deubiquitination. In terms of processing, autocatalytic cleavage of USP1 following UV irradiation inactivates it, leading to an increase in ubiquitinated PCNA, recruitment of POLH and translesion synthesis. Ubiquitinated by the CRL2(KLHDC2) complex following autocatalytic cleavage, leading to its degradation: the CRL2(KLHDC2) complex recognizes the diglycine (Gly-Gly) at the C-terminus.

It localises to the nucleus. It catalyses the reaction Thiol-dependent hydrolysis of ester, thioester, amide, peptide and isopeptide bonds formed by the C-terminal Gly of ubiquitin (a 76-residue protein attached to proteins as an intracellular targeting signal).. In terms of biological role, negative regulator of DNA damage repair which specifically deubiquitinates monoubiquitinated FANCD2. Also involved in PCNA-mediated translesion synthesis (TLS) by deubiquitinating monoubiquitinated PCNA. Has almost no deubiquitinating activity by itself and requires the interaction with WDR48 to have a high activity. The polypeptide is Ubiquitin carboxyl-terminal hydrolase 1 (USP1) (Homo sapiens (Human)).